The chain runs to 266 residues: Calpain small subunit 1 (266 aa).

Met-1 bears the N-acetylmethionine mark. At Ser-6 the chain carries Phosphoserine. An EF-hand 1; atypical domain is found at 94-128 (EEVRQFRRLFAQLAGDDMEVSATELMNILNKVVTR). Ca(2+)-binding residues include Ala-107, Asp-110, Glu-112, Glu-117, Asp-135, Asp-150, Asp-152, Thr-154, Lys-156, and Glu-161. EF-hand domains are found at residues 137–170 (FGIDTCRSMVAVMDSDTTGKLGFEEFKYLWNNIK), 167–202 (NNIKKWQAIYKQFDVDRSGTIGSSELPGAFEAAGFH), 203–231 (LNEHLYSMIIRRYSDEGGNMDFDNFISCL), and 232–266 (VRLDAMFRAFKSLDKDGTGQIQVNIQEWLQLTMYS). Lys-177 bears the N6-acetyllysine mark. Ca(2+)-binding residues include Asp-180, Asp-182, Ser-184, Thr-186, Glu-191, and Asp-223.

As to quaternary structure, homodimer or heterodimer of a large (catalytic) and a small (regulatory) subunit. In presence of calcium, the heterodimer dissociates.

The protein resides in the cytoplasm. The protein localises to the cell membrane. Regulatory subunit of the calcium-regulated non-lysosomal thiol-protease which catalyzes limited proteolysis of substrates involved in cytoskeletal remodeling and signal transduction. Essential for embryonic development. This is Calpain small subunit 1 (CAPNS1) from Sus scrofa (Pig).